A 173-amino-acid chain; its full sequence is Co-chaperone protein HscB homolog (173 aa).

In terms of domain architecture, J spans 5 to 77 (CHFALFELQP…PKRARYLLAM (73 aa)).

Belongs to the HscB family. In terms of assembly, interacts with HscA and stimulates its ATPase activity.

Functionally, co-chaperone involved in the maturation of iron-sulfur cluster-containing proteins. Seems to help targeting proteins to be folded toward HscA. The chain is Co-chaperone protein HscB homolog from Pseudomonas fluorescens (strain SBW25).